Reading from the N-terminus, the 285-residue chain is Ribosomal RNA small subunit methyltransferase I (285 aa).

This sequence belongs to the methyltransferase superfamily. RsmI family.

It localises to the cytoplasm. The catalysed reaction is cytidine(1402) in 16S rRNA + S-adenosyl-L-methionine = 2'-O-methylcytidine(1402) in 16S rRNA + S-adenosyl-L-homocysteine + H(+). Functionally, catalyzes the 2'-O-methylation of the ribose of cytidine 1402 (C1402) in 16S rRNA. The chain is Ribosomal RNA small subunit methyltransferase I from Mycobacterium tuberculosis (strain ATCC 25618 / H37Rv).